The primary structure comprises 832 residues: MKQKRGKQDVKMLESAPPQLLPKKGRLEISELAPQQRTIRTAEEIETAYNEAVRKHPFYDNADHTIDFHDATVFRDARGVVGGVFLPGALPAFAATMAADVLRPAAVRTSLRSNMFGGFAPLSGIAGYFDYRGSPVELKCRKTSFTYENVHSWPNVFPMIDYVSAIYKAVFPEQWAAQDAAVPDIVRIHGSPFSTLTVNQQFRTASHTDAGDFDMGYGLLAVLEGKFEGLSLALDDFGVCFRMQPRDILIFNTHFFHSNTEPELNHPRDDWSRLTCVCYYRAALGEPACVAEYERRLARAKEIGASPPPAVDAILQKDNGNNFNKPAPTFPYLLTPFGGAASVCSLHCCTAKLLRLHELLLENPTLEVILFGESLRTDDGLPRREKEQLISVHLPVVVKMSPSGGFSELGGALKAAEEKQYFFEEKYLADELGPDLMSMWTQSRAHWLRLVKEDWERLCRRDPERTKFTWNNSSAMNAAFFDLCEVAKQMMIGLLNKETPSSAENHSFWILFAAHLNYACTTENGMPRDAVGMHKLNVKLKDFHFGGTRYLKDMPPEEQERRLERKKRIEEARRRGSSAHETHTDNWLLNDTFDYQQEDRKVEFEENGWMTPEAYVKHLGLKPCGDVTAAASPTEPIHVLVVLPRPAAAATAKDAKRDVPLATSEESIRLLMNPAAQRVLRGKARNVALPSPLSFGGVKITVLFDGDDIDCIHPDFVILQHLLATIEEDEAAKARVKYWARVARYCVFVVETDVRDRRHFLLREEVRVAYEDVAEDCFRSLHAAAYSTKYNRLRTTPSLIALCNRKNIGLRFKFRGSPLNTIALVVVGERLD.

Positions 1 to 12 (MKQKRGKQDVKM) are enriched in basic and acidic residues. The tract at residues 1 to 24 (MKQKRGKQDVKMLESAPPQLLPKK) is disordered. A thymine dioxygenase region spans residues 80-282 (VVGGVFLPGA…RLTCVCYYRA (203 aa)). Fe cation contacts are provided by His207, Asp209, and His257. A 2-oxoglutarate-binding site is contributed by Arg273. Residues 409 to 578 (LGGALKAAEE…IEEARRRGSS (170 aa)) form a DNA-binding JBP1 domain region.

The protein belongs to the TET family. JBP1 subfamily. As to quaternary structure, monomer. Binds to DNA as a monomer. Requires Fe(2+) as cofactor.

Its subcellular location is the nucleus. The enzyme catalyses thymine + 2-oxoglutarate + O2 = 5-hydroxymethyluracil + succinate + CO2. Its function is as follows. Dioxygenase that catalyzes the first step of DNA base J (beta-d-glucosyl-HOMedU) biosynthesis by converting thymine to 5-hydroxymethyluracil (HOMedU). DNA base J is a hypermodified thymidine residue found in the genome of kinetoplastid parasites, which is localized primarily to repetitive DNA, namely the telomeres, and is implicated in the regulation of antigenic variation. Also specifically binds to base J-containing DNA (J-DNA). Involved in propagation and maintenance of DNA base J synthesis initiated by JBP2 by specifically binding already synthesized DNA base J and propagating J synthesis. Thymine dioxygenase activity and J-DNA-binding are independent functions. This Trypanosoma cruzi (strain CL Brener) protein is Thymine dioxygenase JBP1-A (JBP1A).